The following is a 941-amino-acid chain: Isoleucine--tRNA ligase (941 aa).

The short motif at 69–79 (PYANGDIHIGH) is the 'HIGH' region element. Glutamate 589 lines the L-isoleucyl-5'-AMP pocket. The 'KMSKS' region signature appears at 630-634 (KMSKS). ATP is bound at residue lysine 633. Cysteine 915, cysteine 918, cysteine 932, and cysteine 935 together coordinate Zn(2+).

The protein belongs to the class-I aminoacyl-tRNA synthetase family. IleS type 1 subfamily. As to quaternary structure, monomer. Zn(2+) is required as a cofactor.

The protein localises to the cytoplasm. It carries out the reaction tRNA(Ile) + L-isoleucine + ATP = L-isoleucyl-tRNA(Ile) + AMP + diphosphate. Its function is as follows. Catalyzes the attachment of isoleucine to tRNA(Ile). As IleRS can inadvertently accommodate and process structurally similar amino acids such as valine, to avoid such errors it has two additional distinct tRNA(Ile)-dependent editing activities. One activity is designated as 'pretransfer' editing and involves the hydrolysis of activated Val-AMP. The other activity is designated 'posttransfer' editing and involves deacylation of mischarged Val-tRNA(Ile). The protein is Isoleucine--tRNA ligase of Zymomonas mobilis subsp. mobilis (strain ATCC 31821 / ZM4 / CP4).